The chain runs to 166 residues: CDP-archaeol synthase (166 aa).

Transmembrane regions (helical) follow at residues 39 to 59 (IRGF…QMYA), 61 to 81 (ISGL…LLAI), 104 to 124 (EWFL…TLLF), and 127 to 147 (IWML…LTPL).

Belongs to the CDP-archaeol synthase family. Requires Mg(2+) as cofactor.

Its subcellular location is the cell membrane. The enzyme catalyses 2,3-bis-O-(geranylgeranyl)-sn-glycerol 1-phosphate + CTP + H(+) = CDP-2,3-bis-O-(geranylgeranyl)-sn-glycerol + diphosphate. It functions in the pathway membrane lipid metabolism; glycerophospholipid metabolism. Its function is as follows. Catalyzes the formation of CDP-2,3-bis-(O-geranylgeranyl)-sn-glycerol (CDP-archaeol) from 2,3-bis-(O-geranylgeranyl)-sn-glycerol 1-phosphate (DGGGP) and CTP. This reaction is the third ether-bond-formation step in the biosynthesis of archaeal membrane lipids. This Methanospirillum hungatei JF-1 (strain ATCC 27890 / DSM 864 / NBRC 100397 / JF-1) protein is CDP-archaeol synthase.